The chain runs to 417 residues: UDP-N-acetylglucosamine 1-carboxyvinyltransferase (417 aa).

Phosphoenolpyruvate is bound at residue 22–23 (KN). UDP-N-acetyl-alpha-D-glucosamine is bound at residue arginine 92. The active-site Proton donor is the cysteine 116. Cysteine 116 is subject to 2-(S-cysteinyl)pyruvic acid O-phosphothioketal. UDP-N-acetyl-alpha-D-glucosamine-binding positions include 121 to 125 (RPIDL), aspartate 306, and isoleucine 328.

The protein belongs to the EPSP synthase family. MurA subfamily.

It localises to the cytoplasm. The catalysed reaction is phosphoenolpyruvate + UDP-N-acetyl-alpha-D-glucosamine = UDP-N-acetyl-3-O-(1-carboxyvinyl)-alpha-D-glucosamine + phosphate. It participates in cell wall biogenesis; peptidoglycan biosynthesis. Cell wall formation. Adds enolpyruvyl to UDP-N-acetylglucosamine. The polypeptide is UDP-N-acetylglucosamine 1-carboxyvinyltransferase (Buchnera aphidicola subsp. Schizaphis graminum (strain Sg)).